The chain runs to 1581 residues: Rho guanine nucleotide exchange factor 5 (1581 aa).

Disordered stretches follow at residues 25–54, 159–274, 316–643, 659–700, 741–810, and 829–1051; these read EGIMRSSQIPALDPEAQEDRDPSYKWTDGH, VSKE…EQKQ, LRDS…RDGI, SEEF…PPTV, HSHP…PEFY, and VPII…GSSD. Over residues 41–54 the composition is skewed to basic and acidic residues; the sequence is QEDRDPSYKWTDGH. Residues 204 to 221 show a composition bias toward polar residues; that stretch reads KQLQLEATQENQGQEGFL. Positions 228-241 are enriched in acidic residues; the sequence is GLEEQEGQEVEIQE. Basic and acidic residues-rich tracts occupy residues 326–336 and 345–380; these read QESREVEERRV and RLVEKSEIVKRKQRDHDQTGKVMPVRDQKEVVDSGD. Position 446 is a phosphoserine (serine 446). The segment covering 474–492 has biased composition (basic and acidic residues); sequence LDNRTHNSQQEEFRLRKGI. The segment covering 496–507 has biased composition (polar residues); sequence SASTSVAPSGTR. Low complexity predominate over residues 515 to 531; it reads PNVFSSTATLSPVSSSV. Composition is skewed to polar residues over residues 569-595, 603-613, 662-685, 748-760, and 779-791; these read TSDTANPHSPLSSYTGVTQHLRSNSFP, TPDSLGMSLSF, FTSNPERPSSPHGSPTWGSPQNSA, TLSSGLHRSSKGS, and TPESPNHTQTSIP. Residues 829 to 843 are compositionally biased toward pro residues; the sequence is VPIIDPSSEPPPLPP. 3 stretches are compositionally biased toward polar residues: residues 867 to 881, 889 to 905, and 912 to 925; these read PNNQDWTASTLSVGR, GRSTESLPLTSRCNNEV, and SNMTNLLSPSSPTT. Phosphoserine is present on residues serine 953 and serine 969. Residues 975–986 show a composition bias toward basic and acidic residues; that stretch reads KNSEKPLHHQLE. Phosphoserine is present on residues serine 1029 and serine 1110. The region spanning 1158 to 1342 is the DH domain; that stretch reads KLQEAKFELI…EKLIRDCNSN (185 aa). The region spanning 1375–1488 is the PH domain; the sequence is LVKSGELTAL…SALAMPREEL (114 aa). The SH3 domain maps to 1494 to 1555; sequence YDSPQVQCLR…PVQQVEFISN (62 aa).

As to quaternary structure, interacts with SRC. Forms a ternary complex with SRC and the PI3K 85 kDa subunit. Interacts with and is activated by the heterodimer formed by GNB1 and GNG2. Interacts with ODAM (via C-terminus). Interacts with RHOA. Activation of SRC induces tyrosine phosphorylation of ARHGEF5.

It is found in the nucleus. It localises to the cytoplasm. The protein resides in the cell projection. The protein localises to the podosome. Its function is as follows. Guanine nucleotide exchange factor which activates Rho GTPases. Strongly activates RHOA. Also strongly activates RHOB, weakly activates RHOC and RHOG and shows no effect on RHOD, RHOV, RHOQ or RAC1. Involved in regulation of cell shape and actin cytoskeletal organization. Plays a role in actin organization by generating a loss of actin stress fibers and the formation of membrane ruffles and filopodia. Required for SRC-induced podosome formation. Involved in positive regulation of immature dendritic cell migration. This Mus musculus (Mouse) protein is Rho guanine nucleotide exchange factor 5.